The following is a 345-amino-acid chain: Anthranilate phosphoribosyltransferase (345 aa).

5-phospho-alpha-D-ribose 1-diphosphate-binding positions include G84, 87–88, T92, 94–97, 112–120, and S124; these read GD, NIST, and KHGNRSVSS. G84 is a binding site for anthranilate. S96 contacts Mg(2+). N115 contacts anthranilate. R170 provides a ligand contact to anthranilate. Residues D229 and E230 each contribute to the Mg(2+) site.

The protein belongs to the anthranilate phosphoribosyltransferase family. Homodimer. The cofactor is Mg(2+).

It catalyses the reaction N-(5-phospho-beta-D-ribosyl)anthranilate + diphosphate = 5-phospho-alpha-D-ribose 1-diphosphate + anthranilate. Its pathway is amino-acid biosynthesis; L-tryptophan biosynthesis; L-tryptophan from chorismate: step 2/5. Functionally, catalyzes the transfer of the phosphoribosyl group of 5-phosphorylribose-1-pyrophosphate (PRPP) to anthranilate to yield N-(5'-phosphoribosyl)-anthranilate (PRA). The sequence is that of Anthranilate phosphoribosyltransferase from Xanthomonas euvesicatoria pv. vesicatoria (strain 85-10) (Xanthomonas campestris pv. vesicatoria).